A 535-amino-acid polypeptide reads, in one-letter code: T-complex protein 1 subunit zeta (535 aa).

This sequence belongs to the TCP-1 chaperonin family. As to quaternary structure, heterooligomeric complex of about 850 to 900 kDa that forms two stacked rings, 12 to 16 nm in diameter.

Its subcellular location is the cytoplasm. In terms of biological role, molecular chaperone; assists the folding of proteins upon ATP hydrolysis. Known to play a role, in vitro, in the folding of actin and tubulin. This Schizosaccharomyces pombe (strain 972 / ATCC 24843) (Fission yeast) protein is T-complex protein 1 subunit zeta (cct6).